Reading from the N-terminus, the 301-residue chain is Glycine--tRNA ligase alpha subunit (301 aa).

This sequence belongs to the class-II aminoacyl-tRNA synthetase family. In terms of assembly, tetramer of two alpha and two beta subunits.

Its subcellular location is the cytoplasm. The enzyme catalyses tRNA(Gly) + glycine + ATP = glycyl-tRNA(Gly) + AMP + diphosphate. The sequence is that of Glycine--tRNA ligase alpha subunit from Polaromonas sp. (strain JS666 / ATCC BAA-500).